The sequence spans 379 residues: 1-deoxy-D-xylulose 5-phosphate reductoisomerase (379 aa).

Positions 10, 11, 12, 13, 38, 39, and 121 each coordinate NADPH. K122 is a binding site for 1-deoxy-D-xylulose 5-phosphate. E123 provides a ligand contact to NADPH. Mn(2+) is bound at residue D147. 1-deoxy-D-xylulose 5-phosphate contacts are provided by S148, E149, S173, and H196. E149 contributes to the Mn(2+) binding site. G202 is an NADPH binding site. S209, N214, K215, and E218 together coordinate 1-deoxy-D-xylulose 5-phosphate. E218 serves as a coordination point for Mn(2+).

This sequence belongs to the DXR family. Requires Mg(2+) as cofactor. Mn(2+) is required as a cofactor.

The enzyme catalyses 2-C-methyl-D-erythritol 4-phosphate + NADP(+) = 1-deoxy-D-xylulose 5-phosphate + NADPH + H(+). Its pathway is isoprenoid biosynthesis; isopentenyl diphosphate biosynthesis via DXP pathway; isopentenyl diphosphate from 1-deoxy-D-xylulose 5-phosphate: step 1/6. Functionally, catalyzes the NADPH-dependent rearrangement and reduction of 1-deoxy-D-xylulose-5-phosphate (DXP) to 2-C-methyl-D-erythritol 4-phosphate (MEP). The sequence is that of 1-deoxy-D-xylulose 5-phosphate reductoisomerase from Chlamydia muridarum (strain MoPn / Nigg).